A 117-amino-acid polypeptide reads, in one-letter code: Modulator protein MzrA (117 aa).

The Cytoplasmic segment spans residues 1–9 (MNSPGLRKP). The chain crosses the membrane as a helical span at residues 10-29 (TIWRPLLLLFPLLALLLSMS). The Periplasmic portion of the chain corresponds to 30 to 117 (SPRLPDEVML…THGTIRVARS (88 aa)).

Belongs to the MzrA family. As to quaternary structure, interacts with EnvZ.

The protein localises to the cell inner membrane. Its function is as follows. Modulates the activity of the EnvZ/OmpR two-component regulatory system, probably by directly modulating EnvZ enzymatic activity and increasing stability of phosphorylated OmpR. This chain is Modulator protein MzrA, found in Dickeya zeae (strain Ech586) (Dickeya dadantii (strain Ech586)).